Here is a 484-residue protein sequence, read N- to C-terminus: Suppressor of fused homolog (484 aa).

Residues 1–21 (MAELRPSVAPGPAAPPASGPS) are disordered. A compositionally biased stretch (pro residues) spans 12–21 (PAAPPASGPS). Lysine 257 participates in a covalent cross-link: Glycyl lysine isopeptide (Lys-Gly) (interchain with G-Cter in ubiquitin). Positions 279-360 (SRPPEDEEDS…SSTAIIPHEL (82 aa)) are disordered. Phosphoserine is present on serine 301. At lysine 303 the chain carries N6-acetyllysine. Lysine 321 is covalently cross-linked (Glycyl lysine isopeptide (Lys-Gly) (interchain with G-Cter in SUMO2)). Over residues 336 to 347 (THDRAPSRKDSL) the composition is skewed to basic and acidic residues. Residues serine 342, serine 346, and serine 352 each carry the phosphoserine modification. The residue at position 353 (threonine 353) is a Phosphothreonine. Position 481 is a phosphoserine (serine 481).

This sequence belongs to the SUFU family. As to quaternary structure, may form homodimers. Interacts with ULK3; inactivating the protein kinase activity of ULK3. Interacts with RAB23. Part of a DNA-bound corepressor complex containing SAP18, GLI1 and SIN3. Part of a complex containing CTNNB1. Binds BTRC, GLI2, GLI3, SAP18 and STK36. Binds both free and DNA-bound GLI1. Interacts with KIF7. Interacts with GLI3FL and this interaction regulates the formation of either repressor or activator forms of GLI3. Its association with GLI3FL is regulated by Hh signaling and dissociation of the SUFU-GLI3 interaction requires the presence of the ciliary motor KIF3A. Polyubiquitinated at Lys-257 by the SCF(FBXL17) complex, leading to its subsequent degradation and allowing the release of GLI1 for proper hedgehog/smoothened signal transduction. Ubiquitination is impaired by phosphorylation at Ser-342, Ser-346, Ser-352 and Thr-353. Post-translationally, phosphorylation at Ser-342, Ser-346, Ser-352 and Thr-353 prevents ubiquitination by the SCF(FBXL17) complex. As to expression, widely expressed in adult and fetal tissues.

Its subcellular location is the cytoplasm. The protein localises to the nucleus. Negative regulator in the hedgehog/smoothened signaling pathway. Down-regulates GLI1-mediated transactivation of target genes. Part of a corepressor complex that acts on DNA-bound GLI1. May also act by linking GLI1 to BTRC and thereby targeting GLI1 to degradation by the proteasome. Sequesters GLI1, GLI2 and GLI3 in the cytoplasm, this effect is overcome by binding of STK36 to both SUFU and a GLI protein. Negative regulator of beta-catenin signaling. Regulates the formation of either the repressor form (GLI3R) or the activator form (GLI3A) of the full-length form of GLI3 (GLI3FL). GLI3FL is complexed with SUFU in the cytoplasm and is maintained in a neutral state. Without the Hh signal, the SUFU-GLI3 complex is recruited to cilia, leading to the efficient processing of GLI3FL into GLI3R. When Hh signaling is initiated, SUFU dissociates from GLI3FL and the latter translocates to the nucleus, where it is phosphorylated, destabilized, and converted to a transcriptional activator (GLI3A). Required for normal embryonic development. Required for the proper formation of hair follicles and the control of epidermal differentiation. This chain is Suppressor of fused homolog, found in Mus musculus (Mouse).